The following is a 551-amino-acid chain: Medium/long-chain-fatty-acid--CoA/3-oxocholest-4-en-26-oate--CoA ligase (551 aa).

Residues threonine 172–lysine 180, aspartate 417, arginine 432, and lysine 523 each bind ATP.

Belongs to the ATP-dependent AMP-binding enzyme family.

It catalyses the reaction a medium-chain fatty acid + ATP + CoA = a medium-chain fatty acyl-CoA + AMP + diphosphate. It carries out the reaction a long-chain fatty acid + ATP + CoA = a long-chain fatty acyl-CoA + AMP + diphosphate. The enzyme catalyses (25S)-3-oxocholest-4-en-26-oate + ATP + CoA = (25S)-3-oxocholest-4-en-26-oyl-CoA + AMP + diphosphate. It functions in the pathway lipid metabolism; fatty acid biosynthesis. The protein operates within steroid metabolism; cholesterol metabolism. Plays an essential role in degradation of the side chains of C-24 branched-chain sterols. Not essential for degradation of straight chain sterols such as cholesterol. Catalyzes the activation of medium/long-chain fatty acids as acyl-coenzyme A (acyl-CoA), which are then transferred to the multifunctional polyketide synthase (PKS) type III for further chain extension. May be involved in the degradation of cholesterol via the degradation of the side chains of C-24 branched-chain sterols. The polypeptide is Medium/long-chain-fatty-acid--CoA/3-oxocholest-4-en-26-oate--CoA ligase (Mycolicibacterium smegmatis (strain ATCC 700084 / mc(2)155) (Mycobacterium smegmatis)).